Reading from the N-terminus, the 285-residue chain is mRNA decay factor CTH2 (285 aa).

Residues 37–55 (INIRELEEYYNKTILNEDN) are required for mRNA decay activity. The disordered stretch occupies residues 132–164 (LQQLSQQKPKNDASFSSEKESSAQPKVKSQVQE). Polar residues predominate over residues 153 to 164 (SAQPKVKSQVQE). 2 C3H1-type zinc fingers span residues 169–197 (LYKT…HGLG) and 207–235 (NFRT…HGDD). A disordered region spans residues 252–271 (STSKQSDEKRSNGRGSAKKK).

Interacts with DHH1.

The protein localises to the nucleus. The protein resides in the cytoplasm. It is found in the P-body. Its function is as follows. Binds to specific AU-rich elements (ARE) in the 3'-untranslated region of target mRNAs and promotes their degradation. In response to iron deficiency, promotes the decay of many mRNAs encoding proteins involved in iron-dependent pathways. Recruits the DHH1 helicase to the SDH4 mRNA and promotes SDH4 mRNA decay. Also destabilizes target mRNA by modulating 3'-end processing, creating extended transcripts that are prone for degradation. The protein is mRNA decay factor CTH2 (TIS11) of Saccharomyces cerevisiae (strain ATCC 204508 / S288c) (Baker's yeast).